The sequence spans 274 residues: DNA damage-inducible protein D (274 aa).

This chain is DNA damage-inducible protein D (dinD), found in Escherichia coli (strain K12).